Consider the following 643-residue polypeptide: uncharacterized protein (643 aa).

The disordered stretch occupies residues 561–643 (LNQELETSSE…GADRKKRGVY (83 aa)). Gly residues predominate over residues 591-606 (SRGGRGGRGARGGNRG). Residues 617–635 (GHDRQMKEKHKSDIKQRGA) show a composition bias toward basic and acidic residues.

This is an uncharacterized protein from Caenorhabditis elegans.